We begin with the raw amino-acid sequence, 621 residues long: Phytoene desaturase (621 aa).

An N-terminal signal peptide occupies residues 1 to 23 (MPSTSKRPTAIVIGSGVGGVSTA). A disordered region spans residues 394–425 (HASQAHQLSASRNGHISSASPPDQPGLTPTEK). Positions 397 to 414 (QAHQLSASRNGHISSASP) are enriched in polar residues. A helical membrane pass occupies residues 598–618 (WEQWVSVLIYLLVGIFAWLWM).

This sequence belongs to the carotenoid/retinoid oxidoreductase family. The cofactor is NAD(+).

It localises to the membrane. The enzyme catalyses 15-cis-phytoene + 5 A = all-trans-3,4-didehydrolycopene + 5 AH2. It participates in carotenoid biosynthesis; lycopene biosynthesis. In terms of biological role, phytoene desaturase involved in the carotenoid biosynthesis pathway. Converts phytoene into 3,4-didehydrolycopene via the intermediary of phytofluene, zeta-carotene, neurosporene and lycopene, by introducing up to five double bonds into phytoene. The chain is Phytoene desaturase (PDH1) from Cercospora nicotianae (Barn spot disease fungus).